The following is a 121-amino-acid chain: Large ribosomal subunit protein bL20 (121 aa).

It belongs to the bacterial ribosomal protein bL20 family.

In terms of biological role, binds directly to 23S ribosomal RNA and is necessary for the in vitro assembly process of the 50S ribosomal subunit. It is not involved in the protein synthesizing functions of that subunit. The protein is Large ribosomal subunit protein bL20 of Sphingopyxis alaskensis (strain DSM 13593 / LMG 18877 / RB2256) (Sphingomonas alaskensis).